The following is a 304-amino-acid chain: Arginine-binding protein ArgT (304 aa).

An N-terminal signal peptide occupies residues 1 to 26; it reads MRFPKIPKRAVAATVGIVATSFTLAS. A lipid anchor (N-palmitoyl cysteine) is attached at C27. Residue C27 is the site of S-diacylglycerol cysteine attachment.

This sequence belongs to the bacterial solute-binding protein 3 family. The complex is probably composed of two ATP-binding proteins (ArgV), two transmembrane proteins (ArgU) and a solute-binding protein (ArgT).

It localises to the cell membrane. Part of the ABC transporter complex ArgTUV involved in L-arginine import. May also transport L-citrulline. Binds L-arginine and its molecular precursor L-citrulline, but not L-histidine, L-glutamate, L-glutamine, L-lysine or L-cysteine. The chain is Arginine-binding protein ArgT from Corynebacterium glutamicum (strain ATCC 13032 / DSM 20300 / JCM 1318 / BCRC 11384 / CCUG 27702 / LMG 3730 / NBRC 12168 / NCIMB 10025 / NRRL B-2784 / 534).